An 805-amino-acid polypeptide reads, in one-letter code: Na(+)/H(+) antiporter subunit A (805 aa).

Transmembrane regions (helical) follow at residues 4-22 (LHWA…PFLY), 29-51 (HTGW…YLSI), 80-102 (SLLF…IFYL), 109-128 (LNNF…GVVL), 132-154 (LIVL…SYWF), 167-189 (MLIT…VMTG), 209-231 (FLPA…PFHI), 244-266 (SAYL…LTPV), 271-293 (AEWF…TSAV), 300-322 (GILA…LGSA), 332-354 (PAFY…TFKG), 375-397 (LGGL…ASMA), 431-453 (IIIV…IMFF), 474-496 (IGML…FPNI), 529-551 (GFNA…FLMM), 597-614 (YFAY…YTMF), 629-651 (IAPY…PFIN), 656-674 (AVVV…FVVF), 679-701 (LALT…FYHL), 714-736 (NVLN…LSSL), and 778-795 (MLEV…IALI).

This sequence belongs to the CPA3 antiporters (TC 2.A.63) subunit A family. As to quaternary structure, forms a heterooligomeric complex that consists of seven subunits: MrpA, MrpB, MrpC, MrpD, MrpE, MrpF and MrpG.

The protein localises to the cell membrane. Mnh complex is a Na(+)Li(+)/H(+) antiporter involved in Na(+) and/or Li(+) excretion and Na(+) resistance. Na(+)/H(+) antiport consumes a transmembrane electrical potential, and is thus inferred to be electrogenic. Does not transport K(+), Ca(2+) or Mg(2+). This chain is Na(+)/H(+) antiporter subunit A (mrpA), found in Alkalihalophilus pseudofirmus (strain ATCC BAA-2126 / JCM 17055 / OF4) (Bacillus pseudofirmus).